Here is a 499-residue protein sequence, read N- to C-terminus: Na(+)/H(+) antiporter NhaB (499 aa).

11 consecutive transmembrane segments (helical) span residues 33–53 (PVIF…EFIF), 66–86 (PGGL…HTVY), 89–109 (VSGN…IYFM), 128–148 (AILS…LDAL), 237–257 (FIEF…AGLI), 305–325 (AIVA…VGLI), 326–346 (GLTV…HQIG), 349–369 (FEEA…VGVI), 393–413 (MFFI…VATV), 449–469 (ATPN…APLI), and 477–497 (VWMA…MIVI).

This sequence belongs to the NhaB Na(+)/H(+) (TC 2.A.34) antiporter family.

It is found in the cell inner membrane. The enzyme catalyses 2 Na(+)(in) + 3 H(+)(out) = 2 Na(+)(out) + 3 H(+)(in). Functionally, na(+)/H(+) antiporter that extrudes sodium in exchange for external protons. The chain is Na(+)/H(+) antiporter NhaB from Hahella chejuensis (strain KCTC 2396).